A 318-amino-acid polypeptide reads, in one-letter code: Aspartate carbamoyltransferase catalytic subunit (318 aa).

Residues arginine 59 and threonine 60 each coordinate carbamoyl phosphate. Lysine 87 serves as a coordination point for L-aspartate. Residues arginine 109, histidine 137, and glutamine 140 each contribute to the carbamoyl phosphate site. L-aspartate is bound by residues arginine 170 and arginine 224. The carbamoyl phosphate site is built by glycine 265 and proline 266.

This sequence belongs to the aspartate/ornithine carbamoyltransferase superfamily. ATCase family. As to quaternary structure, heterododecamer (2C3:3R2) of six catalytic PyrB chains organized as two trimers (C3), and six regulatory PyrI chains organized as three dimers (R2).

The enzyme catalyses carbamoyl phosphate + L-aspartate = N-carbamoyl-L-aspartate + phosphate + H(+). It functions in the pathway pyrimidine metabolism; UMP biosynthesis via de novo pathway; (S)-dihydroorotate from bicarbonate: step 2/3. Catalyzes the condensation of carbamoyl phosphate and aspartate to form carbamoyl aspartate and inorganic phosphate, the committed step in the de novo pyrimidine nucleotide biosynthesis pathway. The protein is Aspartate carbamoyltransferase catalytic subunit of Rhizobium rhizogenes (strain K84 / ATCC BAA-868) (Agrobacterium radiobacter).